Consider the following 474-residue polypeptide: Glutamate--tRNA ligase (474 aa).

The short motif at 9-19 is the 'HIGH' region element; it reads PSPTGYLHVGG. The short motif at 240 to 244 is the 'KMSKS' region element; it reads KLSKR. An ATP-binding site is contributed by lysine 243.

This sequence belongs to the class-I aminoacyl-tRNA synthetase family. Glutamate--tRNA ligase type 1 subfamily. As to quaternary structure, monomer.

It localises to the cytoplasm. It catalyses the reaction tRNA(Glu) + L-glutamate + ATP = L-glutamyl-tRNA(Glu) + AMP + diphosphate. In terms of biological role, catalyzes the attachment of glutamate to tRNA(Glu) in a two-step reaction: glutamate is first activated by ATP to form Glu-AMP and then transferred to the acceptor end of tRNA(Glu). This Aliivibrio salmonicida (strain LFI1238) (Vibrio salmonicida (strain LFI1238)) protein is Glutamate--tRNA ligase.